We begin with the raw amino-acid sequence, 648 residues long: TBC1 domain family member 17 (648 aa).

The tract at residues 218–309 (DPYSTTFSSF…PELKNRIFSG (92 aa)) is required for interaction with OPTN. The tract at residues 240 to 259 (PQPEGAASDLPPPPDDEPEP) is disordered. Residues 310-520 (GLSPSLRREA…RLWEVLWTGL (211 aa)) form the Rab-GAP TBC domain. The segment at 594–648 (LAPPAEPHSPSPTASPLPLSPTRAPPTPPPSTDTAPQPDSSLEILPEEEDEGADS) is disordered. Residues 597–624 (PAEPHSPSPTASPLPLSPTRAPPTPPPS) are compositionally biased toward pro residues. Phosphoserine is present on residues S602 and S604. T606 carries the phosphothreonine modification. The residue at position 608 (S608) is a Phosphoserine. A Phosphothreonine modification is found at T615. The segment covering 625-634 (TDTAPQPDSS) has biased composition (low complexity). Acidic residues predominate over residues 638–648 (LPEEEDEGADS).

In terms of assembly, interacts with OPTN; this interaction mediates TBC1D17 transient association with Rab8.

The protein localises to the cytoplasmic vesicle. It localises to the autophagosome. It is found in the cytoplasm. Its subcellular location is the recycling endosome. Its function is as follows. Probable RAB GTPase-activating protein that inhibits RAB8A/B function. Reduces Rab8 recruitment to tubules emanating from the endocytic recycling compartment (ERC) and inhibits Rab8-mediated endocytic trafficking, such as that of transferrin receptor (TfR). Involved in regulation of autophagy. This chain is TBC1 domain family member 17, found in Homo sapiens (Human).